Here is a 379-residue protein sequence, read N- to C-terminus: Multicilin (379 aa).

Disordered stretches follow at residues 26 to 46 (SRRS…PWKS) and 87 to 106 (LLGT…NPSL). Positions 175–223 (EQYWKEVADQNQRALGTALIENNQLHVTLTQKQEEIASLRERNVQLKEL) form a coiled coil. Basic and acidic residues predominate over residues 289–309 (LQNRDPKRPRLQQEPDSKDCS). Positions 289-311 (LQNRDPKRPRLQQEPDSKDCSTR) are disordered.

Belongs to the geminin family. In terms of assembly, heterodimer (via coiled-coil domain) with GMNN (via coiled-coil domain); targets GMNN to the nucleus. Can form homodimers (in vitro, via coiled-coil domain), but these are much less stable than the heterodimer formed with GMNN.

The protein localises to the nucleus. Functionally, transcription regulator specifically required for multiciliate cell differentiation. Acts in a multiprotein complex containing E2F4 and E2F5 that binds and activates genes required for centriole biogenesis. Required for the deuterosome-mediated acentriolar pathway. Plays a role in mitotic cell cycle progression by promoting cell cycle exit. Modulates GMNN activity by reducing its affinity for CDT1. The chain is Multicilin (Mcidas) from Rattus norvegicus (Rat).